A 901-amino-acid chain; its full sequence is HTH-type transcriptional regulator MalT (901 aa).

39–46 (SPAGYGKT) serves as a coordination point for ATP. In terms of domain architecture, HTH luxR-type spans 829 to 894 (ELIHTSPLTQ…AAVQHAQKLL (66 aa)). Residues 853–872 (NEQIAGELEVAATTIKTHIR) constitute a DNA-binding region (H-T-H motif).

The protein belongs to the MalT family. In terms of assembly, monomer in solution. Oligomerizes to an active state in the presence of the positive effectors ATP and maltotriose.

Its activity is regulated as follows. Activated by ATP and maltotriose, which are both required for DNA binding. In terms of biological role, positively regulates the transcription of the maltose regulon whose gene products are responsible for uptake and catabolism of malto-oligosaccharides. Specifically binds to the promoter region of its target genes, recognizing a short DNA motif called the MalT box. In Shigella sonnei (strain Ss046), this protein is HTH-type transcriptional regulator MalT.